The primary structure comprises 409 residues: MQLPKVVLLLCAAALLLSGAVRGCGPGRVVGRRRRPTKLSPLSYKQFSPNVPEKTLGASGRYEGKISRNSERFKELTPNYNPDIIFKDEEITGADRLMTQRCKDRLNSLAISVMNQWPGVKLRVTEGWDEDGHHFEESLHYEGRAVDITTSDRDRNKYGMLARLAVEAGFDWVYYESKAHIHCSVKSEHSAAAKTGGCFPGEALATLESGEKIPVSQLSPGLRVLAMDNSGRPTYSDFLSFLDHSPKEEHMFQVIKTQDPHRRLFLTPAHLIFVSDNYSTPASEFQAVFASSVRPGQYILVSNVVGLIPAKVRSVNTQTNYGAYAPLTQHGTLVVDDVVVSCFALVQKQRLAQIVYWPLRVLYNLGIIAGTQPSQQMGIHWYSKALYHLGRLILHGNEFHPLGIVQLES.

A signal peptide spans 1-23 (MQLPKVVLLLCAAALLLSGAVRG). Residue Cys-24 is the site of N-palmitoyl cysteine attachment. Ca(2+)-binding residues include Glu-89, Glu-90, Asp-95, Thr-125, Glu-126, Asp-129, and Asp-131. Zn(2+)-binding residues include His-140, Asp-147, and His-182. Gly-197 carries Cholesterol glycine ester lipidation.

This sequence belongs to the hedgehog family. In terms of assembly, multimer. As to quaternary structure, interacts with BOC and CDON. Interacts with PTCH1. Interacts with glypican GPC3. In terms of processing, cholesterylation is required for N-product targeting to lipid rafts and multimerization. Post-translationally, the C-terminal domain displays an autoproteolysis activity and a cholesterol transferase activity. Both activities result in the cleavage of the full-length protein and covalent attachment of a cholesterol moiety to the C-terminal of the newly generated N-product. The N-product is the active species in both local and long-range signaling, whereas the C-product is degraded in the endoplasmic reticulum. N-palmitoylation by HHAT of N-product is required for indian hedgehog protein N-product multimerization and full activity. In terms of tissue distribution, expressed in the marginal zone at early gastrulation. At stage 14, expression begins in the neural plate with expression becoming more prominent in the anterodorsal area at neural tube closure. At this stage, also expressed diffusely in the somitic and pre-somitic mesoderm. By the early tadpole (stages 28-30), expression is widespread throughout anterior structures with highest levels in the otic vesicle, the eye, and the branchial arches.

It is found in the cell membrane. It localises to the endoplasmic reticulum membrane. The protein resides in the golgi apparatus membrane. The protein localises to the secreted. The catalysed reaction is glycyl-L-cysteinyl-[protein] + cholesterol + H(+) = [protein]-C-terminal glycyl cholesterol ester + N-terminal L-cysteinyl-[protein]. In terms of biological role, signal involved in the early induction and patterning of anterodorsal ectoderm, nervous system and somites. Induces ectopic cement gland formation in embryos. It is involved in the regulation of endochondral skeleton formation, and the development of retinal pigment epithelium (RPE), photoreceptors and periocular tissues. Functionally, the C-terminal part of the indian hedgehog protein precursor displays an autoproteolysis and a cholesterol transferase activity. Both activities result in the cleavage of the full-length protein into two parts followed by the covalent attachment of a cholesterol moiety to the C-terminal of the newly generated N-product. Both activities occur in the endoplasmic reticulum. Its function is as follows. The dually lipidated indian hedgehog protein N-product is a morphogen which is essential for a variety of patterning events during development. Binds to the patched (PTCH1) receptor, which functions in association with smoothened (SMO), to activate the transcription of target genes. Signal involved in the early induction and patterning of anterodorsal ectoderm, nervous system and somites. Induces ectopic cement gland formation in embryos. The sequence is that of Indian hedgehog protein from Xenopus laevis (African clawed frog).